Reading from the N-terminus, the 118-residue chain is D-dopachrome decarboxylase (118 aa).

Proline 2 carries the N-acetylproline modification. N6-acetyllysine is present on lysine 33. Serine 90 carries the post-translational modification Phosphoserine.

This sequence belongs to the MIF family. In terms of assembly, homotrimer.

It is found in the cytoplasm. The catalysed reaction is D-dopachrome + H(+) = 5,6-dihydroxyindole + CO2. In terms of biological role, tautomerization of D-dopachrome with decarboxylation to give 5,6-dihydroxyindole (DHI). This chain is D-dopachrome decarboxylase (Ddt), found in Mus musculus (Mouse).